Reading from the N-terminus, the 255-residue chain is MVMSSYMVNSKYVDPKFPPCEEYLQGGYLGEQGADYYGGGAQGADFQPPGLYPRPDFGEQPFGGSGPGPGSALPARGHGQEPGGPGGHYAAPGEPCPAPPAPPPAPLPGARAYSQSDPKQPPSGTALKQPAVVYPWMKKVHVNSVNPNYTGGEPKRSRTAYTRQQVLELEKEFHFNRYLTRRRRIEIAHTLCLSERQIKIWFQNRRMKWKKDHKLPNTKGRSSSSSSSSSCSSSVAPSQHLQPMAKDHHTDLTTL.

Residues 31–127 (EQGADYYGGG…PKQPPSGTAL (97 aa)) are disordered. The segment covering 94-107 (EPCPAPPAPPPAPL) has biased composition (pro residues). Residues 133 to 138 (VYPWMK) carry the Antp-type hexapeptide motif. A DNA-binding region (homeobox) is located at residues 154–213 (PKRSRTAYTRQQVLELEKEFHFNRYLTRRRRIEIAHTLCLSERQIKIWFQNRRMKWKKDH). Residues 212–255 (DHKLPNTKGRSSSSSSSSSCSSSVAPSQHLQPMAKDHHTDLTTL) form a disordered region. The span at 222–234 (SSSSSSSSSCSSS) shows a compositional bias: low complexity. The span at 245 to 255 (AKDHHTDLTTL) shows a compositional bias: basic and acidic residues.

Belongs to the Antp homeobox family. Deformed subfamily. Forms a DNA-binding heterodimer with transcription factor PBX1.

The protein localises to the nucleus. Functionally, sequence-specific transcription factor which is part of a developmental regulatory system that provides cells with specific positional identities on the anterior-posterior axis. The sequence is that of Homeobox protein Hox-D4 (HOXD4) from Homo sapiens (Human).